A 749-amino-acid polypeptide reads, in one-letter code: MQTSETGSDTGSTVTLQTSVASQAAVPTQVVQQVPVQQQVQQVQTVQQVQHVYPAQVQYVEGSDTVYTNGAIRTTTYPYTETQMYSQNTGGNYFDTQGSSAQVTTVVSSHSMVGTGGIQMGVTGGQLISSSGGTYLIGNSMENSGHSVTHTTRASPATIEMAIETLQKSDGLSTHRSSLLNSHLQWLLDNYETAEGVSLPRSTLYNHYLRHCQEHKLDPVNAASFGKLIRSIFMGLRTRRLGTRGNSKYHYYGIRVKPDSPLNRLQEDMQYMAMRQQPMQQKQRYKPMQKVDGVADGFTGSGQQTGTSVEQTVIAQSQHHQQFLDASRALPEFGEVEISSLPDGTTFEDIKSLQSLYREHCEAILDVVVNLQFSLIEKLWQTFWRYSPSTPADGTTITESSNLSEIESRLPKAKLITLCKHESILKWMCNCDHGMYQALVEILIPDVLRPIPSALTQAIRNFAKSLEGWLSNAMNNIPQRMIQTKVAAVSAFAQTLRRYTSLNHLAQAARAVLQNTSQINQMLSDLNRVDFANVQEQASWVCQCDDNMVQRLETDFKMTLQQQSTLEQWAAWLDNVMMQALKPYEGRPSFPKAARQFLLKWSFYSSMVIRDLTLRSAASFGSFHLIRLLYDEYMFYLVEHRVAQVTGETPIAVMGEFGDLNAVSPGNLDKDEGSEVESETDEDLDDSSEPRAKREKTELSQAFPVGCMQPVLESAVQPSLLNPLHSEHIVTSTQTIRQCSATGNTYTAV.

Residues 183 to 258 constitute a DNA-binding region (RFX-type winged-helix); the sequence is HLQWLLDNYE…YHYYGIRVKP (76 aa). The segment at 663–699 is disordered; it reads VSPGNLDKDEGSEVESETDEDLDDSSEPRAKREKTEL. Acidic residues predominate over residues 674 to 687; that stretch reads SEVESETDEDLDDS. A compositionally biased stretch (basic and acidic residues) spans 688–698; the sequence is SEPRAKREKTE.

Belongs to the RFX family. Heterodimer; heterodimerizes with RFX1 and RFX2, and RFX6. Expressed in ciliated cells of the node and in the ciliated ependymal cells of the subcommissural organ (SCO), choroid plexuses (CP) and ventricular walls during embryonic and postnatal development. Expressed in developing and mature pancreatic endocrine cells during embryogenesis and in adults (at protein level).

It is found in the nucleus. In terms of biological role, transcription factor required for ciliogenesis and islet cell differentiation during endocrine pancreas development. Essential for the differentiation of nodal monocilia and left-right asymmetry specification during embryogenesis. Required for the biogenesis of motile cilia by governing growth and beating efficiency of motile cells. Also required for ciliated ependymal cell differentiation. Together with RFX6, participates in the differentiation of 4 of the 5 islet cell types during endocrine pancreas development, with the exception of pancreatic PP (polypeptide-producing) cells. Regulates transcription by forming a heterodimer with another RFX protein and binding to the X-box in the promoter of target genes. Regulates the expression of genes involved in ciliary assembly (DYNC2LI1, FOXJ1 and BBS4) and genes involved in ciliary motility (DNAH11, DNAH9 and DNAH5). Represses transcription of MAP1A in non-neuronal cells but not in neuronal cells. This Mus musculus (Mouse) protein is Transcription factor RFX3 (Rfx3).